The chain runs to 700 residues: UvrABC system protein C (700 aa).

One can recognise a GIY-YIG domain in the interval 11 to 90 (TTPGVYLYKD…IKKHRPRYNI (80 aa)). Residues 200 to 235 (TELIDMLRADMQAASDALEFEEAALLRDQLQAVERT) enclose the UVR domain.

This sequence belongs to the UvrC family. As to quaternary structure, interacts with UvrB in an incision complex.

Its subcellular location is the cytoplasm. Its function is as follows. The UvrABC repair system catalyzes the recognition and processing of DNA lesions. UvrC both incises the 5' and 3' sides of the lesion. The N-terminal half is responsible for the 3' incision and the C-terminal half is responsible for the 5' incision. This is UvrABC system protein C from Oleidesulfovibrio alaskensis (strain ATCC BAA-1058 / DSM 17464 / G20) (Desulfovibrio alaskensis).